The primary structure comprises 520 residues: Ribonuclease Y (520 aa).

A helical membrane pass occupies residues 3–23; that stretch reads IEIQWIGIGAAFLVGAIGGAL. Positions 210-273 constitute a KH domain; that stretch reads AVSVVPLPND…EVARLALERL (64 aa). The 94-residue stretch at 336-429 folds into the HD domain; that stretch reads VLQHSIEVAF…VQAADALSGA (94 aa).

This sequence belongs to the RNase Y family.

Its subcellular location is the cell membrane. Endoribonuclease that initiates mRNA decay. This Syntrophotalea carbinolica (strain DSM 2380 / NBRC 103641 / GraBd1) (Pelobacter carbinolicus) protein is Ribonuclease Y.